A 512-amino-acid polypeptide reads, in one-letter code: ATP synthase subunit alpha (512 aa).

ATP is bound at residue 169–176 (GDRQTGKT).

It belongs to the ATPase alpha/beta chains family. F-type ATPases have 2 components, CF(1) - the catalytic core - and CF(0) - the membrane proton channel. CF(1) has five subunits: alpha(3), beta(3), gamma(1), delta(1), epsilon(1). CF(0) has four main subunits: a(1), b(1), b'(1) and c(9-12).

It is found in the cell inner membrane. It carries out the reaction ATP + H2O + 4 H(+)(in) = ADP + phosphate + 5 H(+)(out). Its function is as follows. Produces ATP from ADP in the presence of a proton gradient across the membrane. The alpha chain is a regulatory subunit. In Roseobacter denitrificans (strain ATCC 33942 / OCh 114) (Erythrobacter sp. (strain OCh 114)), this protein is ATP synthase subunit alpha.